The following is a 483-amino-acid chain: Serine hydroxymethyltransferase, cytosolic (483 aa).

An N6-(pyridoxal phosphate)lysine modification is found at K257.

This sequence belongs to the SHMT family. As to quaternary structure, homotetramer. Identified in complex with ABRAXAS2 and the other subunits of the BRISC complex, at least composed of ABRAXAS2, BRCC3/BRCC36, BABAM2 and BABAM1/NBA1. It depends on pyridoxal 5'-phosphate as a cofactor.

Its subcellular location is the cytoplasm. The enzyme catalyses (6R)-5,10-methylene-5,6,7,8-tetrahydrofolate + glycine + H2O = (6S)-5,6,7,8-tetrahydrofolate + L-serine. Its pathway is one-carbon metabolism; tetrahydrofolate interconversion. Functionally, interconversion of serine and glycine. In Pongo abelii (Sumatran orangutan), this protein is Serine hydroxymethyltransferase, cytosolic (SHMT1).